The primary structure comprises 504 residues: Sphingosine-1-phosphate transporter SPNS2 (504 aa).

The next 11 helical transmembrane spans lie at leucine 48–methionine 70, glycine 94–leucine 114, isoleucine 122–threonine 142, valine 182–glycine 202, tryptophan 214–valine 234, valine 269–isoleucine 289, leucine 317–threonine 337, leucine 351–alanine 371, isoleucine 375–isoleucine 395, phenylalanine 415–isoleucine 435, and leucine 460–leucine 480.

The protein belongs to the major facilitator superfamily. Spinster (TC 2.A.1.49) family.

The protein resides in the cell membrane. Its subcellular location is the endosome membrane. The catalysed reaction is sphing-4-enine 1-phosphate(in) = sphing-4-enine 1-phosphate(out). It catalyses the reaction sphinganine 1-phosphate(in) = sphinganine 1-phosphate(out). Functionally, lipid transporter that specifically mediates export of sphingosine-1-phosphate (sphing-4-enine 1-phosphate, S1P) and sphinganine-1-phosphate, which play critical roles in regulating heart development. Mediates the export of S1P from cells in the extraembryonic yolk syncytial layer (YSL), thereby regulating myocardial precursor migration. The protein is Sphingosine-1-phosphate transporter SPNS2 of Danio rerio (Zebrafish).